Here is a 399-residue protein sequence, read N- to C-terminus: Methylthioribose kinase (399 aa).

ATP is bound by residues N40, K57, and 111 to 113 (EDL). D229 provides a ligand contact to substrate. 246 to 248 (DAE) is an ATP binding site. R344 lines the substrate pocket.

The protein belongs to the methylthioribose kinase family. As to quaternary structure, homodimer.

It carries out the reaction 5-(methylsulfanyl)-D-ribose + ATP = 5-(methylsulfanyl)-alpha-D-ribose 1-phosphate + ADP + H(+). It functions in the pathway amino-acid biosynthesis; L-methionine biosynthesis via salvage pathway; S-methyl-5-thio-alpha-D-ribose 1-phosphate from S-methyl-5'-thioadenosine (hydrolase route): step 2/2. In terms of biological role, catalyzes the phosphorylation of methylthioribose into methylthioribose-1-phosphate. This chain is Methylthioribose kinase, found in Citrobacter koseri (strain ATCC BAA-895 / CDC 4225-83 / SGSC4696).